A 329-amino-acid chain; its full sequence is Glycerol-3-phosphate dehydrogenase [NAD(P)+] (329 aa).

Residues Ser13, Trp14, His34, and Lys105 each contribute to the NADPH site. Residues Lys105, Gly134, and Ser136 each contribute to the sn-glycerol 3-phosphate site. NADPH is bound at residue Ala138. Positions 189, 242, 252, 253, and 254 each coordinate sn-glycerol 3-phosphate. Residue Lys189 is the Proton acceptor of the active site. Position 253 (Arg253) interacts with NADPH. Residues Val277 and Glu279 each contribute to the NADPH site.

Belongs to the NAD-dependent glycerol-3-phosphate dehydrogenase family.

The protein localises to the cytoplasm. The enzyme catalyses sn-glycerol 3-phosphate + NAD(+) = dihydroxyacetone phosphate + NADH + H(+). It catalyses the reaction sn-glycerol 3-phosphate + NADP(+) = dihydroxyacetone phosphate + NADPH + H(+). Its pathway is membrane lipid metabolism; glycerophospholipid metabolism. Functionally, catalyzes the reduction of the glycolytic intermediate dihydroxyacetone phosphate (DHAP) to sn-glycerol 3-phosphate (G3P), the key precursor for phospholipid synthesis. This Legionella pneumophila subsp. pneumophila (strain Philadelphia 1 / ATCC 33152 / DSM 7513) protein is Glycerol-3-phosphate dehydrogenase [NAD(P)+].